A 211-amino-acid polypeptide reads, in one-letter code: Thiamine-phosphate synthase (211 aa).

Residues 39 to 43 (QLREK) and asparagine 71 contribute to the 4-amino-2-methyl-5-(diphosphooxymethyl)pyrimidine site. Residues aspartate 72 and aspartate 91 each contribute to the Mg(2+) site. Serine 110 serves as a coordination point for 4-amino-2-methyl-5-(diphosphooxymethyl)pyrimidine. 136 to 138 (TAT) provides a ligand contact to 2-[(2R,5Z)-2-carboxy-4-methylthiazol-5(2H)-ylidene]ethyl phosphate. Residue lysine 139 coordinates 4-amino-2-methyl-5-(diphosphooxymethyl)pyrimidine. 2-[(2R,5Z)-2-carboxy-4-methylthiazol-5(2H)-ylidene]ethyl phosphate-binding positions include alanine 167 and 187-188 (VS).

This sequence belongs to the thiamine-phosphate synthase family. Mg(2+) serves as cofactor.

The enzyme catalyses 2-[(2R,5Z)-2-carboxy-4-methylthiazol-5(2H)-ylidene]ethyl phosphate + 4-amino-2-methyl-5-(diphosphooxymethyl)pyrimidine + 2 H(+) = thiamine phosphate + CO2 + diphosphate. The catalysed reaction is 2-(2-carboxy-4-methylthiazol-5-yl)ethyl phosphate + 4-amino-2-methyl-5-(diphosphooxymethyl)pyrimidine + 2 H(+) = thiamine phosphate + CO2 + diphosphate. It carries out the reaction 4-methyl-5-(2-phosphooxyethyl)-thiazole + 4-amino-2-methyl-5-(diphosphooxymethyl)pyrimidine + H(+) = thiamine phosphate + diphosphate. It functions in the pathway cofactor biosynthesis; thiamine diphosphate biosynthesis; thiamine phosphate from 4-amino-2-methyl-5-diphosphomethylpyrimidine and 4-methyl-5-(2-phosphoethyl)-thiazole: step 1/1. Its function is as follows. Condenses 4-methyl-5-(beta-hydroxyethyl)thiazole monophosphate (THZ-P) and 2-methyl-4-amino-5-hydroxymethyl pyrimidine pyrophosphate (HMP-PP) to form thiamine monophosphate (TMP). The sequence is that of Thiamine-phosphate synthase from Solidesulfovibrio magneticus (strain ATCC 700980 / DSM 13731 / RS-1) (Desulfovibrio magneticus).